The sequence spans 128 residues: Glycophorin-C (128 aa).

Over residues 1–12 (MWSTRSPNSTAW) the composition is skewed to polar residues. The interval 1-48 (MWSTRSPNSTAWPLSLEPDPGMASASTTMHTTTIAEPDPGMSGWPDGR) is disordered. Residues 1–57 (MWSTRSPNSTAWPLSLEPDPGMASASTTMHTTTIAEPDPGMSGWPDGRMETSTPTIM) lie on the Extracellular side of the membrane. O-linked (GalNAc...) serine glycosylation occurs at Ser-3. O-linked (GalNAc...) threonine glycosylation occurs at Thr-4. O-linked (GalNAc...) serine glycosylation is present at Ser-6. N-linked (GlcNAc...) asparagine glycosylation is present at Asn-8. Ser-9 carries O-linked (GalNAc...) serine glycosylation. The O-linked (GalNAc...) threonine glycan is linked to Thr-10. Ser-15, Ser-24, and Ser-26 each carry an O-linked (GalNAc...) serine glycan. The span at 22–33 (MASASTTMHTTT) shows a compositional bias: low complexity. O-linked (GalNAc...) threonine glycosylation is found at Thr-27, Thr-28, Thr-31, Thr-32, and Thr-33. Ser-42 carries O-linked (GalNAc...) serine glycosylation. Residues 58–81 (DIVVIAGVIAAVAIVLVSLLFVML) traverse the membrane as a helical; Signal-anchor for type III membrane protein segment. The Cytoplasmic segment spans residues 82–128 (RYMYRHKGTYHTNEAKGTEFAESADAALQGDPALQDAGDSSRKEYFI). Phosphoserine occurs at positions 104 and 122. Residues 108 to 128 (ALQGDPALQDAGDSSRKEYFI) are disordered.

Belongs to the glycophorin-C family. In terms of processing, O-glycosylated with core 1 or possibly core 8 glycans. As to expression, glycophorin-C is expressed in erythrocytes. Glycophorin-D and IsoGPC are ubiquitously expressed.

The protein resides in the cell membrane. This protein is a minor sialoglycoprotein in human erythrocyte membranes. The blood group Gerbich antigens and receptors for Plasmodium falciparum merozoites are most likely located within the extracellular domain. Glycophorin-C plays an important role in regulating the stability of red cells. The polypeptide is Glycophorin-C (GYPC) (Homo sapiens (Human)).